The following is a 176-amino-acid chain: Zinc finger protein 428 (176 aa).

Residues 1 to 152 form a disordered region; it reads MTETREPTET…EEEGGTYHCT (152 aa). The segment covering 16-46 has biased composition (acidic residues); that stretch reads LEEDDEDLSPEPDSEEEEEEEEEETTDDPEY. A Phosphothreonine modification is found at Thr96. Over residues 126-138 the composition is skewed to basic and acidic residues; it reads PSRTGETRPAGRD. The segment at 149 to 171 adopts a C2H2-type zinc-finger fold; that stretch reads YHCTECEDSFDNLGELHGHFMLH.

The chain is Zinc finger protein 428 (Znf428) from Mus musculus (Mouse).